The primary structure comprises 419 residues: 3-oxo-isoapionate-4-phosphate decarboxylase (419 aa).

Mg(2+)-binding residues include lysine 179, aspartate 181, and glutamate 182. The residue at position 179 (lysine 179) is an N6-carboxylysine.

This sequence belongs to the RuBisCO large chain family. Mg(2+) is required as a cofactor.

It carries out the reaction 3-oxoisoapionate 4-phosphate + H(+) = L-erythrulose 1-phosphate + CO2. It participates in carbohydrate metabolism. Its function is as follows. Involved in catabolism of D-apiose. Catalyzes the decarboxylation of 3-oxo-isoapionate 4-phosphate to L-erythrulose 1-phosphate. The chain is 3-oxo-isoapionate-4-phosphate decarboxylase from Rhizobium rhizogenes (strain K84 / ATCC BAA-868) (Agrobacterium radiobacter).